Reading from the N-terminus, the 801-residue chain is Na(+)/H(+) antiporter subunit A1 (801 aa).

21 helical membrane-spanning segments follow: residues 4 to 25, 30 to 49, 79 to 101, 108 to 127, 131 to 153, 166 to 188, 208 to 230, 243 to 265, 270 to 289, 302 to 324, 339 to 361, 373 to 395, 429 to 451, 472 to 494, 526 to 548, 589 to 611, 621 to 641, 646 to 668, 672 to 694, 707 to 729, and 767 to 784; these read LHIAVILPLIFALIIPILYRFF, LGWFVLPVPIVIFIYMLTLI, LGLLFSLLISGIGSLVVLYSIGY, LGNFYCYLLLFMGAMLGVVL, VIILYLFWELTSFSSFLLISFWR, LIITVFGGLSLLGGIILLAIPTQ, FIFAMILIMIGAFTKSAQFPFYI, SAYLHSATMVKAGLYLIARMTPI, QGWVWTVTLVGLITLFWASL, AFSTVSQLGMIMAMLGIGAISYH, AAIFHLINHATFKGALFMITGAV, LGGLLTIMPISFTITVITALSMA, YLFPIIGIVGSVFTFVYSIKFIM, ILMLLSPAILATLVIVFGLFPGI, AFLSTLVIYILGILLIVTFSYWV, NNLVIIFGALILLTFVTIFSVPF, IRIFEVCIVILLLSAAFLILF, LFSIIMLSAVGYAVSVLFIFFKA, ALTQFVVESISTALFLLCFYHLP, LTNALIAGGVGLSVIIIGLIAYG, and LFESSVLGIAGLAVYTMI.

Belongs to the CPA3 antiporters (TC 2.A.63) subunit A family. In terms of assembly, may form a heterooligomeric complex that consists of seven subunits: mnhA1, mnhB1, mnhC1, mnhD1, mnhE1, mnhF1 and mnhG1.

The protein localises to the cell membrane. Its activity is regulated as follows. Na(+) extrusion is completely inhibited by the H(+) conductor carbonyl cyanide m-chlorophenylhydrazone (CCCP). In terms of biological role, mnh complex is a Na(+)/H(+) antiporter involved in Na(+) excretion. The polypeptide is Na(+)/H(+) antiporter subunit A1 (mnhA1) (Staphylococcus aureus (strain MSSA476)).